Here is a 179-residue protein sequence, read N- to C-terminus: Cytochrome c-type biogenesis protein CcmE (179 aa).

The Cytoplasmic portion of the chain corresponds to 1 to 8 (MNPRRKSR). The chain crosses the membrane as a helical; Signal-anchor for type II membrane protein span at residues 9-29 (LTIILFVLLGVTIASSLVLYA). The Periplasmic portion of the chain corresponds to 30–179 (LRQNIDLFYT…AVNSVEEGKK (150 aa)). Heme-binding residues include His131 and Tyr135. Basic and acidic residues-rich tracts occupy residues 138–148 (PDLSEKMEQVH) and 161–179 (ESDRDRLDKAVNSVEEGKK). The tract at residues 138 to 179 (PDLSEKMEQVHKPMGISNQDMQGESDRDRLDKAVNSVEEGKK) is disordered.

It belongs to the CcmE/CycJ family.

It localises to the cell inner membrane. Its function is as follows. Heme chaperone required for the biogenesis of c-type cytochromes. Transiently binds heme delivered by CcmC and transfers the heme to apo-cytochromes in a process facilitated by CcmF and CcmH. The sequence is that of Cytochrome c-type biogenesis protein CcmE from Mannheimia succiniciproducens (strain KCTC 0769BP / MBEL55E).